The sequence spans 353 residues: Ribosomal RNA large subunit methyltransferase M (353 aa).

S-adenosyl-L-methionine is bound by residues S179, 212–215, D231, D251, and D267; that span reads APGG. K296 acts as the Proton acceptor in catalysis.

This sequence belongs to the class I-like SAM-binding methyltransferase superfamily. RNA methyltransferase RlmE family. RlmM subfamily. As to quaternary structure, monomer.

The protein localises to the cytoplasm. The enzyme catalyses cytidine(2498) in 23S rRNA + S-adenosyl-L-methionine = 2'-O-methylcytidine(2498) in 23S rRNA + S-adenosyl-L-homocysteine + H(+). Functionally, catalyzes the 2'-O-methylation at nucleotide C2498 in 23S rRNA. This chain is Ribosomal RNA large subunit methyltransferase M, found in Laribacter hongkongensis (strain HLHK9).